Reading from the N-terminus, the 618-residue chain is GMC oxidoreductase family protein Mala s 12 (618 aa).

A signal peptide spans 1 to 23; it reads MKGIVSWAVVSAALVLSATESLA. FAD is bound by residues Val-129 and Val-280. His-556 acts as the Proton donor in catalysis. The active-site Proton acceptor is His-599.

The protein belongs to the GMC oxidoreductase family. In terms of assembly, monomer. FAD serves as cofactor.

Its subcellular location is the secreted. The polypeptide is GMC oxidoreductase family protein Mala s 12 (Malassezia sympodialis (strain ATCC 42132) (Atopic eczema-associated yeast)).